The chain runs to 366 residues: Protein sigma-NS (366 aa).

The segment at 1–11 (MASSLRAAISK) is important for ssRNA-binding and formation of complexes.

This sequence belongs to the orthoreovirus sigma-NS protein family. Homooligomer; in presence of RNA. Interacts with protein mu-NS; this interaction allows the localization of sigma-NS to the viral factories. Interacts with host G3BP1 (via C-terminus); this interaction induces the relocalization of G3BP1 and other SG proteins to the viral factories periphery.

The protein localises to the host cytoplasm. Its function is as follows. Protein that binds to ssRNA and participates with protein mu-NS in forming the matrix of viral factories, which are large inclusions in the host cytoplasm where replication intermediates are assembled and viral RNA replication takes place. Plays a role in the inhibition of the integrated stress response (ISR) to escape from host cell translational shutoff. Participates in the disruption of stress granules (SG) through its association with host G3BP1 and mu-NS. This is Protein sigma-NS (S3) from Mammalia (T3D).